A 330-amino-acid chain; its full sequence is MVKVYYDADANLEFLKGKKIAVLGYGSQGHAQAQSLRDSGLDVVVGLRKDSARWSKAEADGLQVATVPDACAQAEVIQVLLPDEIQGRVYAEEIEPYLSEGKALMFSHGFNIHFGQIVPPKNVDVFLVAPKSPGHLVRRMYAEGKGVPGLVAVHQDYTGKAKDIALAYAKGIGCTKAGVFETSFREETETDLFGEQAVLCGGVSELIKAGFDTLVEAGYAPEMAYFECLHELKLIVDLIYEGGLSRMRYSVSNTAEYGDYMIGPRIVNEETREEMRQVLMEIQDGTFARNWMLENQVKSPQFNAVRKMEQEHPIEEVGARLREMMPWLKK.

Residues 2-182 (VKVYYDADAN…GCTKAGVFET (181 aa)) form the KARI N-terminal Rossmann domain. Residues 25 to 28 (YGSQ), Arg-48, Ser-51, and 83 to 86 (DEIQ) contribute to the NADP(+) site. The active site involves His-108. An NADP(+)-binding site is contributed by Gly-134. The KARI C-terminal knotted domain occupies 183-328 (SFREETETDL…ARLREMMPWL (146 aa)). Residues Asp-191, Glu-195, Glu-227, and Glu-231 each coordinate Mg(2+). A substrate-binding site is contributed by Ser-252.

The protein belongs to the ketol-acid reductoisomerase family. The cofactor is Mg(2+).

It catalyses the reaction (2R)-2,3-dihydroxy-3-methylbutanoate + NADP(+) = (2S)-2-acetolactate + NADPH + H(+). It carries out the reaction (2R,3R)-2,3-dihydroxy-3-methylpentanoate + NADP(+) = (S)-2-ethyl-2-hydroxy-3-oxobutanoate + NADPH + H(+). It functions in the pathway amino-acid biosynthesis; L-isoleucine biosynthesis; L-isoleucine from 2-oxobutanoate: step 2/4. The protein operates within amino-acid biosynthesis; L-valine biosynthesis; L-valine from pyruvate: step 2/4. Its function is as follows. Involved in the biosynthesis of branched-chain amino acids (BCAA). Catalyzes an alkyl-migration followed by a ketol-acid reduction of (S)-2-acetolactate (S2AL) to yield (R)-2,3-dihydroxy-isovalerate. In the isomerase reaction, S2AL is rearranged via a Mg-dependent methyl migration to produce 3-hydroxy-3-methyl-2-ketobutyrate (HMKB). In the reductase reaction, this 2-ketoacid undergoes a metal-dependent reduction by NADPH to yield (R)-2,3-dihydroxy-isovalerate. This chain is Ketol-acid reductoisomerase (NADP(+)), found in Desulforamulus reducens (strain ATCC BAA-1160 / DSM 100696 / MI-1) (Desulfotomaculum reducens).